A 1447-amino-acid polypeptide reads, in one-letter code: DNA topoisomerase 2 (1447 aa).

Residues N72, N101, 129–131 (SSN), and 142–149 (GRNGYGAK) contribute to the ATP site. Residues 323–325 (KKK) form an interaction with DNA region. Residue 357–359 (QTK) participates in ATP binding. A Toprim domain is found at 435-552 (CTLILTEGDS…ELLRLPFLEE (118 aa)). Residues E441, D521, and D523 each contribute to the Mg(2+) site. Residues 695–1169 (IPSLVDGLKP…TPEMLWLDDL (475 aa)) enclose the Topo IIA-type catalytic domain. The O-(5'-phospho-DNA)-tyrosine intermediate role is filled by Y785. The tract at residues 972–981 (KLTTTLSTNQ) is interaction with DNA. Disordered regions lie at residues 1079–1110 (EDAE…EVDP), 1183–1231 (ERAE…DGEP), and 1246–1447 (AAAK…DFNC). Residues 1081–1094 (AEQADEEDEEEEEA) are compositionally biased toward acidic residues. The segment covering 1255 to 1281 (KEPKKPKEPKEPKVKKEPKGKQIKAEP) has biased composition (basic and acidic residues). Over residues 1283-1293 (ASGDEVDEFDA) the composition is skewed to acidic residues. S1284 carries the phosphoserine modification. Basic and acidic residues-rich tracts occupy residues 1310–1325 (VKKE…KKEN) and 1332–1359 (SKID…ERPG). The residue at position 1344 (S1344) is a Phosphoserine. Phosphothreonine is present on T1352. Phosphoserine is present on residues S1374, S1385, S1392, and S1396. Over residues 1374-1394 (SDEEEDGGNVGSDDDGNASDD) the composition is skewed to acidic residues. The segment covering 1395–1408 (DSPKRPAKRGREDE) has biased composition (basic and acidic residues). Positions 1413–1423 (AKKKAPPKKRR) are enriched in basic residues. Over residues 1427–1447 (ESDDDDIEIDEDDDDDSDFNC) the composition is skewed to acidic residues.

Belongs to the type II topoisomerase family. Homodimer. Interacts with mod(mdg4). Interacts with barr. Interacts with ph-p. Interacts with mle; the interaction mediates association with the MSL dosage compensation complex. Requires Mg(2+) as cofactor. It depends on Mn(2+) as a cofactor. Ca(2+) is required as a cofactor. Post-translationally, phosphorylated. Phosphorylation by casein kinase II enhances ATPase activity.

Its subcellular location is the nucleus. The protein localises to the chromosome. It is found in the cytoplasm. It carries out the reaction ATP-dependent breakage, passage and rejoining of double-stranded DNA.. Functionally, control of topological states of DNA by transient breakage and subsequent rejoining of DNA strands. Topoisomerase II makes double-strand breaks. Essential during mitosis and meiosis for proper segregation of daughter chromosomes. During meiosis, it disrupts heterochromatic connections between achiasmate and chiasmate homologs after spindle assembly so that chromosomes can separate at prometaphase I. During mitosis, it functions in the separation of sister chromatids by establishing amphitelic kinetochore attachments in mitotic spindles. May have a role in chromatin condensation and chromosome structure. May be involved in X-chromosome dosage compensation, perhaps by modifying the topological state of compensated genes. Regulates activity of the gypsy chromatin insulator complex by binding to mod(mdg4) and preventing its degradation. This Drosophila melanogaster (Fruit fly) protein is DNA topoisomerase 2.